The sequence spans 668 residues: UvrABC system protein B (668 aa).

One can recognise a Helicase ATP-binding domain in the interval 36–276 (DNIKGGEKAQ…EEAIKNIMEE (241 aa)). Residue 49 to 56 (GATGTGKT) participates in ATP binding. The short motif at 102–125 (YYDYYQPEAYVPSSDTYIEKDSSV) is the Beta-hairpin element. The Helicase C-terminal domain occupies 440–606 (QMDDLLGEIN…TIKKEIRDLI (167 aa)). Positions 632–667 (QEAIKKLQKQMHEAAELLDFELAAQIRDMVLELKSM) constitute a UVR domain.

This sequence belongs to the UvrB family. In terms of assembly, forms a heterotetramer with UvrA during the search for lesions. Interacts with UvrC in an incision complex.

The protein localises to the cytoplasm. Its function is as follows. The UvrABC repair system catalyzes the recognition and processing of DNA lesions. A damage recognition complex composed of 2 UvrA and 2 UvrB subunits scans DNA for abnormalities. Upon binding of the UvrA(2)B(2) complex to a putative damaged site, the DNA wraps around one UvrB monomer. DNA wrap is dependent on ATP binding by UvrB and probably causes local melting of the DNA helix, facilitating insertion of UvrB beta-hairpin between the DNA strands. Then UvrB probes one DNA strand for the presence of a lesion. If a lesion is found the UvrA subunits dissociate and the UvrB-DNA preincision complex is formed. This complex is subsequently bound by UvrC and the second UvrB is released. If no lesion is found, the DNA wraps around the other UvrB subunit that will check the other stand for damage. The chain is UvrABC system protein B from Streptococcus thermophilus (strain ATCC BAA-491 / LMD-9).